We begin with the raw amino-acid sequence, 295 residues long: Protoheme IX farnesyltransferase (295 aa).

The next 9 helical transmembrane spans lie at 8–28 (VTKPGIIFGNLISVIGGFLLA), 35–55 (YPLFLFTLVGVSLVVASGCVF), 74–94 (VLVKGLISPKMSLVYATLLGI), 106–125 (PLAMWLAVMGFVVYVGVYSL), 132–152 (VYGTLIGSLSGAAPPVIGYCA), 162–182 (LILLAIFSLWQMPHSYAIAIF), 208–228 (ITLYIIAFAVATLMLSLGGYA), 233–253 (LVVAAAVSVWWLGMALRGYKA), and 264–284 (FVFSIVAITSLSVMMSVDFMV).

It belongs to the UbiA prenyltransferase family. Protoheme IX farnesyltransferase subfamily.

The protein localises to the cell inner membrane. It catalyses the reaction heme b + (2E,6E)-farnesyl diphosphate + H2O = Fe(II)-heme o + diphosphate. It participates in porphyrin-containing compound metabolism; heme O biosynthesis; heme O from protoheme: step 1/1. Converts heme B (protoheme IX) to heme O by substitution of the vinyl group on carbon 2 of heme B porphyrin ring with a hydroxyethyl farnesyl side group. The protein is Protoheme IX farnesyltransferase of Cronobacter sakazakii (strain ATCC BAA-894) (Enterobacter sakazakii).